A 184-amino-acid polypeptide reads, in one-letter code: Threonylcarbamoyl-AMP synthase (184 aa).

One can recognise a YrdC-like domain in the interval 1-184 (MNNLENIVEQ…IFTQHIFRQG (184 aa)).

The protein belongs to the SUA5 family. TsaC subfamily.

The protein resides in the cytoplasm. It catalyses the reaction L-threonine + hydrogencarbonate + ATP = L-threonylcarbamoyladenylate + diphosphate + H2O. Functionally, required for the formation of a threonylcarbamoyl group on adenosine at position 37 (t(6)A37) in tRNAs that read codons beginning with adenine. Catalyzes the conversion of L-threonine, HCO(3)(-)/CO(2) and ATP to give threonylcarbamoyl-AMP (TC-AMP) as the acyladenylate intermediate, with the release of diphosphate. The protein is Threonylcarbamoyl-AMP synthase of Actinobacillus pleuropneumoniae serotype 5b (strain L20).